A 257-amino-acid polypeptide reads, in one-letter code: MLEIIYQDEHIVAVNKPAGWLVHRSWLDRNETVFVMQTVRDQIGQHVYTVHRLDRPTSGVLLMALSSDVARMLSLQFEQHQIQKTYHAVVRGYVLEGGTVDYAMAEELDKIADKFAKSDKAPQPSVSHYEALAQVEVPLAIGRYETARYSLVALKPETGRKHQLRRHMAHIRHPIIGDSTHGDLRQNRGVAQHFGCSRLMLHASHLHLNHPVTGEALTLTARWDEPWQGLMSQFGWSGIAPHLERVEFPLTASQDNE.

Asp-54 is a catalytic residue.

This sequence belongs to the pseudouridine synthase RluA family.

The catalysed reaction is uridine(65) in tRNA = pseudouridine(65) in tRNA. In terms of biological role, responsible for synthesis of pseudouridine from uracil-65 in transfer RNAs. The chain is tRNA pseudouridine synthase C (truC) from Yersinia pestis.